Consider the following 134-residue polypeptide: Small ribosomal subunit protein uS9 (134 aa).

A disordered region spans residues glutamine 114–arginine 134.

The protein belongs to the universal ribosomal protein uS9 family.

The protein is Small ribosomal subunit protein uS9 of Methanosarcina acetivorans (strain ATCC 35395 / DSM 2834 / JCM 12185 / C2A).